The following is a 113-amino-acid chain: U11-theraphotoxin-Hhn1a (113 aa).

The N-terminal stretch at Met-1–Ala-21 is a signal peptide. Residues Asp-22 to Arg-74 constitute a propeptide that is removed on maturation. Cystine bridges form between Cys-75-Cys-90, Cys-82-Cys-95, and Cys-89-Cys-110.

It belongs to the neurotoxin 14 (magi-1) family. 01 (HNTX-16) subfamily. Expressed by the venom gland.

Its subcellular location is the secreted. Probable ion channel inhibitor. The chain is U11-theraphotoxin-Hhn1a from Cyriopagopus hainanus (Chinese bird spider).